A 727-amino-acid chain; its full sequence is DNA replication licensing factor MCM5 (727 aa).

The region spanning valine 325 to isoleucine 531 is the MCM domain. Glycine 375–serine 382 lines the ATP pocket. Residues serine 507 to aspartate 510 carry the Arginine finger motif.

The protein belongs to the MCM family. In terms of assembly, component of the minichromosome maintenance (MCM) complex, a heterotetramer composed of MCM2, MCM3, MCM4, MCM5, MCM6 and MCM7. Interacts with EGT1. As to expression, expressed in shoot apex and flower buds.

Its subcellular location is the nucleus. The protein resides in the cytoplasm. The enzyme catalyses ATP + H2O = ADP + phosphate + H(+). In terms of biological role, probable component of the MCM2-7 complex (MCM complex) that may function as a DNA helicase and which is essential to undergo a single round of replication initiation and elongation per cell cycle in eukaryotic cells. The polypeptide is DNA replication licensing factor MCM5 (MCM5) (Arabidopsis thaliana (Mouse-ear cress)).